Here is a 198-residue protein sequence, read N- to C-terminus: Ribonuclease HII (198 aa).

The 189-residue stretch at 10–198 (QLVAGVDEVG…PVKRALGLAS (189 aa)) folds into the RNase H type-2 domain. Residues aspartate 16, glutamate 17, and aspartate 108 each contribute to the a divalent metal cation site.

Belongs to the RNase HII family. Mn(2+) serves as cofactor. Mg(2+) is required as a cofactor.

Its subcellular location is the cytoplasm. It catalyses the reaction Endonucleolytic cleavage to 5'-phosphomonoester.. Functionally, endonuclease that specifically degrades the RNA of RNA-DNA hybrids. The chain is Ribonuclease HII from Shigella sonnei (strain Ss046).